Reading from the N-terminus, the 947-residue chain is Bifunctional glutamine synthetase adenylyltransferase/adenylyl-removing enzyme (947 aa).

The tract at residues 1 to 440 (MTPLSSPLSQ…VFNELIGDDE (440 aa)) is adenylyl removase. The interval 450–947 (SEPWREVWQD…ASWRKWLVAV (498 aa)) is adenylyl transferase.

The protein belongs to the GlnE family. Mg(2+) serves as cofactor.

It carries out the reaction [glutamine synthetase]-O(4)-(5'-adenylyl)-L-tyrosine + phosphate = [glutamine synthetase]-L-tyrosine + ADP. The enzyme catalyses [glutamine synthetase]-L-tyrosine + ATP = [glutamine synthetase]-O(4)-(5'-adenylyl)-L-tyrosine + diphosphate. Functionally, involved in the regulation of glutamine synthetase GlnA, a key enzyme in the process to assimilate ammonia. When cellular nitrogen levels are high, the C-terminal adenylyl transferase (AT) inactivates GlnA by covalent transfer of an adenylyl group from ATP to specific tyrosine residue of GlnA, thus reducing its activity. Conversely, when nitrogen levels are low, the N-terminal adenylyl removase (AR) activates GlnA by removing the adenylyl group by phosphorolysis, increasing its activity. The regulatory region of GlnE binds the signal transduction protein PII (GlnB) which indicates the nitrogen status of the cell. The chain is Bifunctional glutamine synthetase adenylyltransferase/adenylyl-removing enzyme from Salmonella agona (strain SL483).